Consider the following 102-residue polypeptide: Gonadotropin subunit beta-1 (102 aa).

5 disulfide bridges follow: C8–C51, C20–C65, C31–C77, C35–C79, and C82–C89. N12 is a glycosylation site (N-linked (GlcNAc...) asparagine).

The protein belongs to the glycoprotein hormones subunit beta family. In terms of assembly, heterodimer of an alpha and a beta chain.

It is found in the secreted. In terms of biological role, involved in gametogenesis and steroidogenesis. The polypeptide is Gonadotropin subunit beta-1 (cgba) (Thunnus obesus (Bigeye tuna)).